The following is a 407-amino-acid chain: Amylovoran biosynthesis glycosyltransferase AmsK (407 aa).

This sequence belongs to the glycosyltransferase group 1 family. Glycosyltransferase 4 subfamily.

It participates in glycan metabolism; exopolysaccharide biosynthesis. Involved in the biosynthesis of amylovoran which functions as a virulence factor. The chain is Amylovoran biosynthesis glycosyltransferase AmsK (amsK) from Erwinia amylovora (Fire blight bacteria).